A 330-amino-acid polypeptide reads, in one-letter code: DNA primase small subunit PriS (330 aa).

Active-site residues include D101 and D103. Zn(2+)-binding residues include C116, C119, C128, and D131. D235 is an active-site residue.

It belongs to the eukaryotic-type primase small subunit family. As to quaternary structure, heterodimer of a small subunit (PriS) and a large subunit (PriL). It depends on Mg(2+) as a cofactor. The cofactor is Mn(2+).

Functionally, catalytic subunit of DNA primase, an RNA polymerase that catalyzes the synthesis of short RNA molecules used as primers for DNA polymerase during DNA replication. The small subunit contains the primase catalytic core and has DNA synthesis activity on its own. Binding to the large subunit stabilizes and modulates the activity, increasing the rate of DNA synthesis while decreasing the length of the DNA fragments, and conferring RNA synthesis capability. The DNA polymerase activity may enable DNA primase to also catalyze primer extension after primer synthesis. May also play a role in DNA repair. Possesses a template-independent 3'-terminal nucleotidyl transferase activity. The chain is DNA primase small subunit PriS from Saccharolobus solfataricus (strain ATCC 35092 / DSM 1617 / JCM 11322 / P2) (Sulfolobus solfataricus).